A 329-amino-acid chain; its full sequence is Lipoyl synthase (329 aa).

The [4Fe-4S] cluster site is built by cysteine 72, cysteine 77, cysteine 83, cysteine 98, cysteine 102, cysteine 105, and serine 313. One can recognise a Radical SAM core domain in the interval 83–303; sequence CWSHGTATIM…QIGLKKGFFE (221 aa).

This sequence belongs to the radical SAM superfamily. Lipoyl synthase family. [4Fe-4S] cluster is required as a cofactor.

The protein resides in the cytoplasm. It catalyses the reaction [[Fe-S] cluster scaffold protein carrying a second [4Fe-4S](2+) cluster] + N(6)-octanoyl-L-lysyl-[protein] + 2 oxidized [2Fe-2S]-[ferredoxin] + 2 S-adenosyl-L-methionine + 4 H(+) = [[Fe-S] cluster scaffold protein] + N(6)-[(R)-dihydrolipoyl]-L-lysyl-[protein] + 4 Fe(3+) + 2 hydrogen sulfide + 2 5'-deoxyadenosine + 2 L-methionine + 2 reduced [2Fe-2S]-[ferredoxin]. It functions in the pathway protein modification; protein lipoylation via endogenous pathway; protein N(6)-(lipoyl)lysine from octanoyl-[acyl-carrier-protein]: step 2/2. In terms of biological role, catalyzes the radical-mediated insertion of two sulfur atoms into the C-6 and C-8 positions of the octanoyl moiety bound to the lipoyl domains of lipoate-dependent enzymes, thereby converting the octanoylated domains into lipoylated derivatives. In Legionella pneumophila (strain Paris), this protein is Lipoyl synthase.